Here is a 623-residue protein sequence, read N- to C-terminus: Glutathione import ATP-binding protein GsiA (623 aa).

ABC transporter domains are found at residues 15-269 and 314-564; these read VENL…RALL and LRVR…RKLL. ATP-binding positions include 49–56 and 357–364; these read GESGSGKS.

It belongs to the ABC transporter superfamily. Glutathione importer (TC 3.A.1.5.11) family. In terms of assembly, the complex is composed of two ATP-binding proteins (GsiA), two transmembrane proteins (GsiC and GsiD) and a solute-binding protein (GsiB).

It is found in the cell inner membrane. The enzyme catalyses glutathione(out) + ATP + H2O = glutathione(in) + ADP + phosphate + H(+). In terms of biological role, part of the ABC transporter complex GsiABCD involved in glutathione import. Responsible for energy coupling to the transport system. The chain is Glutathione import ATP-binding protein GsiA from Escherichia coli O6:H1 (strain CFT073 / ATCC 700928 / UPEC).